The following is a 291-amino-acid chain: Phosphate import ATP-binding protein PstB (291 aa).

The ABC transporter domain occupies 43–286; the sequence is ANVKDLSFWY…PKHAMTEEYI (244 aa). Residue 75-82 participates in ATP binding; the sequence is GASGCGKS.

It belongs to the ABC transporter superfamily. Phosphate importer (TC 3.A.1.7) family. In terms of assembly, the complex is composed of two ATP-binding proteins (PstB), two transmembrane proteins (PstC and PstA) and a solute-binding protein (PstS).

Its subcellular location is the cell inner membrane. It catalyses the reaction phosphate(out) + ATP + H2O = ADP + 2 phosphate(in) + H(+). Functionally, part of the ABC transporter complex PstSACB involved in phosphate import. Responsible for energy coupling to the transport system. This Alcaligenes faecalis protein is Phosphate import ATP-binding protein PstB.